The primary structure comprises 342 residues: S-adenosylmethionine:tRNA ribosyltransferase-isomerase (342 aa).

Belongs to the QueA family. Monomer.

Its subcellular location is the cytoplasm. The catalysed reaction is 7-aminomethyl-7-carbaguanosine(34) in tRNA + S-adenosyl-L-methionine = epoxyqueuosine(34) in tRNA + adenine + L-methionine + 2 H(+). The protein operates within tRNA modification; tRNA-queuosine biosynthesis. Transfers and isomerizes the ribose moiety from AdoMet to the 7-aminomethyl group of 7-deazaguanine (preQ1-tRNA) to give epoxyqueuosine (oQ-tRNA). This Listeria monocytogenes serovar 1/2a (strain ATCC BAA-679 / EGD-e) protein is S-adenosylmethionine:tRNA ribosyltransferase-isomerase.